A 398-amino-acid polypeptide reads, in one-letter code: Alpha-2,8-sialyltransferase 8F (398 aa).

Residues Met1–Pro3 lie on the Cytoplasmic side of the membrane. Residues Gly4–Trp24 form a helical; Signal-anchor for type II membrane protein membrane-spanning segment. The Lumenal portion of the chain corresponds to Cys25–Ala398. 4 N-linked (GlcNAc...) asparagine glycosylation sites follow: Asn66, Asn93, Asn151, and Asn196. 2 cysteine pairs are disulfide-bonded: Cys186-Cys335 and Cys200-Cys395. Substrate contacts are provided by residues Asn214, Asn236 to Ser238, and Ser322 to Gly324. His370 acts as the Proton donor/acceptor in catalysis.

It belongs to the glycosyltransferase 29 family.

It is found in the golgi apparatus membrane. The catalysed reaction is a ganglioside GM3 + CMP-N-acetyl-beta-neuraminate = a ganglioside GD3 + CMP + H(+). It carries out the reaction a ganglioside GM3 (d18:1(4E)) + CMP-N-acetyl-beta-neuraminate = a ganglioside GD3 (d18:1(4E)) + CMP + H(+). It catalyses the reaction a ganglioside GD1a (d18:1(4E)) + CMP-N-acetyl-beta-neuraminate = a ganglioside GT1a (d18:1(4E)) + CMP + H(+). The enzyme catalyses a ganglioside GD1a + CMP-N-acetyl-beta-neuraminate = a ganglioside GT1a + CMP + H(+). The catalysed reaction is a ganglioside GM1b (d18:1(4E)) + CMP-N-acetyl-beta-neuraminate = a ganglioside GD1c (d18:1(4E)) + CMP + H(+). It carries out the reaction a ganglioside GM1b + CMP-N-acetyl-beta-neuraminate = a ganglioside GD1c + CMP + H(+). It catalyses the reaction a ganglioside GM4 (d18:1(4E)) + CMP-N-acetyl-beta-neuraminate = an N-acetyl-alpha-neuraminosyl-(2-&gt;8)-N-acetyl-alpha-neuraminosyl-(2-&gt;3)-beta-D-galactosyl-(1&lt;-&gt;1')-N-acylsphing-4-enine + CMP + H(+). The enzyme catalyses N-acetyl-alpha-neuraminosyl-(2-&gt;3)-beta-D-galactosyl-(1&lt;-&gt;1')-ceramide + CMP-N-acetyl-beta-neuraminate = N-acetyl-alpha-neuraminosyl-(2-&gt;8)-N-acetyl-alpha-neuraminosyl-(2-&gt;3)-beta-D-galactosyl-(1&lt;-&gt;1')-ceramide + CMP + H(+). The catalysed reaction is a ganglioside GT1b (d18:1(4E)) + CMP-N-acetyl-beta-neuraminate = a ganglioside GQ1b (d18:1(4E)) + CMP + H(+). It carries out the reaction a ganglioside GT1b + CMP-N-acetyl-beta-neuraminate = a ganglioside GQ1b + CMP + H(+). It participates in protein modification; protein glycosylation. Its function is as follows. Alpha-2,8-sialyltransferase that prefers O-glycans to N-glycans or glycolipids as acceptor substrates. The minimal acceptor substrate is the NeuAc-alpha-2,3(6)-Gal sequence at the non-reducing end of their carbohydrate groups. The polypeptide is Alpha-2,8-sialyltransferase 8F (Homo sapiens (Human)).